The chain runs to 251 residues: Pyrroloquinoline-quinone synthase (251 aa).

Belongs to the PqqC family.

The enzyme catalyses 6-(2-amino-2-carboxyethyl)-7,8-dioxo-1,2,3,4,7,8-hexahydroquinoline-2,4-dicarboxylate + 3 O2 = pyrroloquinoline quinone + 2 H2O2 + 2 H2O + H(+). It functions in the pathway cofactor biosynthesis; pyrroloquinoline quinone biosynthesis. Its function is as follows. Ring cyclization and eight-electron oxidation of 3a-(2-amino-2-carboxyethyl)-4,5-dioxo-4,5,6,7,8,9-hexahydroquinoline-7,9-dicarboxylic-acid to PQQ. The protein is Pyrroloquinoline-quinone synthase of Pseudomonas putida (strain ATCC 700007 / DSM 6899 / JCM 31910 / BCRC 17059 / LMG 24140 / F1).